The sequence spans 201 residues: Holliday junction branch migration complex subunit RuvA (201 aa).

The segment at M1–L64 is domain I. The domain II stretch occupies residues D65–T143. The interval A144–E154 is flexible linker. The tract at residues E154 to F201 is domain III.

It belongs to the RuvA family. Homotetramer. Forms an RuvA(8)-RuvB(12)-Holliday junction (HJ) complex. HJ DNA is sandwiched between 2 RuvA tetramers; dsDNA enters through RuvA and exits via RuvB. An RuvB hexamer assembles on each DNA strand where it exits the tetramer. Each RuvB hexamer is contacted by two RuvA subunits (via domain III) on 2 adjacent RuvB subunits; this complex drives branch migration. In the full resolvosome a probable DNA-RuvA(4)-RuvB(12)-RuvC(2) complex forms which resolves the HJ.

The protein localises to the cytoplasm. Its function is as follows. The RuvA-RuvB-RuvC complex processes Holliday junction (HJ) DNA during genetic recombination and DNA repair, while the RuvA-RuvB complex plays an important role in the rescue of blocked DNA replication forks via replication fork reversal (RFR). RuvA specifically binds to HJ cruciform DNA, conferring on it an open structure. The RuvB hexamer acts as an ATP-dependent pump, pulling dsDNA into and through the RuvAB complex. HJ branch migration allows RuvC to scan DNA until it finds its consensus sequence, where it cleaves and resolves the cruciform DNA. The polypeptide is Holliday junction branch migration complex subunit RuvA (Chlorobaculum tepidum (strain ATCC 49652 / DSM 12025 / NBRC 103806 / TLS) (Chlorobium tepidum)).